A 303-amino-acid chain; its full sequence is MAAGLSTIAVTLKPLNRSSFSANHPISTAVFPPSLRFNGFRRRKILTVCFVVEERKQSSPMDDDNKPESTTSSSEILMTSRLLKKAEKKKSERFTYLIAAVMSSFGITSMAIMAVYYRFSWQMKGGEVSVLEMFGTFALSVGAAVGMEFWARWAHRALWHDSLWNMHESHHKPREGAFELNDVFAITNAVPAIGLLYYGFLNKGLVPGLCFGAGLGITMFGMAYMFVHDGLVHKRFPVGPIANVPYLRKVAAAHQLHHTDKFKGVPYGLFLGPKEVEEVGGKEELEKEISRRIKLYNKGSSTS.

Residues Met1–Val52 constitute a chloroplast transit peptide. The next 2 helical transmembrane spans lie at Tyr96–Tyr116 and Val130–Trp150. The Fatty acid hydroxylase domain maps to Ala143–Phe270. The Histidine box-1 motif lies at His155–His160. The Histidine box-2 motif lies at Asn165–His171. The next 2 helical transmembrane spans lie at Leu180–Phe200 and Val206–Phe226. The Histidine box-3 motif lies at His228–His233. The short motif at His254 to His258 is the Histidine box-4 element.

Belongs to the sterol desaturase family. Homodimer. Expressed in leaves, flowers, stems, roots and siliques.

The protein resides in the plastid. Its subcellular location is the chloroplast membrane. It carries out the reaction all-trans-beta-carotene + 4 reduced [2Fe-2S]-[ferredoxin] + 2 O2 + 4 H(+) = all-trans-zeaxanthin + 4 oxidized [2Fe-2S]-[ferredoxin] + 2 H2O. Nonheme diiron monooxygenase involved in the biosynthesis of xanthophylls. Specific for beta-ring hydroxylations of beta-carotene. Also has a low activity toward the beta- and epsilon-rings of alpha-carotene. No activity with acyclic carotenoids such as lycopene and neurosporene. Uses ferredoxin as an electron donor. This Arabidopsis thaliana (Mouse-ear cress) protein is Beta-carotene 3-hydroxylase 2, chloroplastic (BETA-OHASE 2).